The primary structure comprises 502 residues: Probable cytosol aminopeptidase (502 aa).

Mn(2+)-binding residues include lysine 269 and aspartate 274. Residue lysine 281 is part of the active site. Residues aspartate 292, aspartate 351, and glutamate 353 each coordinate Mn(2+). Arginine 355 is a catalytic residue.

Belongs to the peptidase M17 family. Mn(2+) serves as cofactor.

Its subcellular location is the cytoplasm. It catalyses the reaction Release of an N-terminal amino acid, Xaa-|-Yaa-, in which Xaa is preferably Leu, but may be other amino acids including Pro although not Arg or Lys, and Yaa may be Pro. Amino acid amides and methyl esters are also readily hydrolyzed, but rates on arylamides are exceedingly low.. The enzyme catalyses Release of an N-terminal amino acid, preferentially leucine, but not glutamic or aspartic acids.. Presumably involved in the processing and regular turnover of intracellular proteins. Catalyzes the removal of unsubstituted N-terminal amino acids from various peptides. In Aliivibrio fischeri (strain MJ11) (Vibrio fischeri), this protein is Probable cytosol aminopeptidase.